A 356-amino-acid chain; its full sequence is uncharacterized protein (356 aa).

Helical transmembrane passes span 2-22 (FEAF…FHRL), 35-55 (AYVT…PIPY), 74-94 (FTNM…EIVV), 99-119 (IMYG…GPFL), 124-144 (VLSL…VALV), and 154-174 (IILI…FVDI). A GGDEF domain is found at 218-353 (QSIALLLIDI…GRNKVMFNPI (136 aa)).

It is found in the cell membrane. This is an uncharacterized protein from Staphylococcus aureus (strain bovine RF122 / ET3-1).